We begin with the raw amino-acid sequence, 860 residues long: Transcription factor E2F8 (860 aa).

The interval 1 to 114 (MENQKENLFS…NEKSQPSRKE (114 aa)) is disordered. S71 bears the Phosphoserine mark. 2 stretches are compositionally biased toward basic and acidic residues: residues 74–84 (IRSRDQKRGLS) and 92–114 (EARD…SRKE). 2 consecutive DNA-binding regions follow at residues 112 to 181 (RKEK…TWHG) and 261 to 347 (RKDK…KWTG). 2 disordered regions span residues 407 to 433 (RRKI…PPVP) and 533 to 616 (TPPH…PKED). A compositionally biased stretch (low complexity) spans 411-426 (SSAPSSPVKSSKAESS). Residues S412 and S416 each carry the phosphoserine modification. The segment covering 542 to 554 (VCPTQSSNATGSK) has biased composition (polar residues). Basic and acidic residues-rich tracts occupy residues 555–565 (DPTDAPTEKTA) and 586–596 (RSKETTGDRGT).

The protein belongs to the E2F/DP family. As to quaternary structure, homodimer and heterodimer: mainly forms homodimers and, to a lesser extent, heterodimers with E2F8. Dimerization is important for DNA-binding. Interacts with HIF1A.

It localises to the nucleus. Its function is as follows. Atypical E2F transcription factor that participates in various processes such as angiogenesis and polyploidization of specialized cells. Mainly acts as a transcription repressor that binds DNA independently of DP proteins and specifically recognizes the E2 recognition site 5'-TTTC[CG]CGC-3'. Directly represses transcription of classical E2F transcription factors such as E2F1: component of a feedback loop in S phase by repressing the expression of E2F1, thereby preventing p53/TP53-dependent apoptosis. Plays a key role in polyploidization of cells in placenta and liver by regulating the endocycle, probably by repressing genes promoting cytokinesis and antagonizing action of classical E2F proteins (E2F1, E2F2 and/or E2F3). Required for placental development by promoting polyploidization of trophoblast giant cells. Acts as a promoter of sprouting angiogenesis, possibly by acting as a transcription activator: associates with HIF1A, recognizes and binds the VEGFA promoter, which is different from canonical E2 recognition site, and activates expression of the VEGFA gene. This Rattus norvegicus (Rat) protein is Transcription factor E2F8 (E2f8).